Consider the following 626-residue polypeptide: Trehalase (626 aa).

The N-terminal stretch at 1-35 is a signal peptide; that stretch reads MASSCSIRCGSRNILVNAAATFLALLVVLRCFANA. Residues 36 to 595 are Extracellular-facing; it reads EKPSPCQSDV…STPQPVVVST (560 aa). Asn104 carries an N-linked (GlcNAc...) asparagine glycan. Substrate-binding positions include Arg181, 188–189, Asn225, and 234–236; these read WD and RSQ. A glycan (N-linked (GlcNAc...) asparagine) is linked at Asn274. Substrate is bound by residues 299–301 and Gly333; that span reads RPE. Asp335 serves as the catalytic Proton donor/acceptor. 4 N-linked (GlcNAc...) asparagine glycosylation sites follow: Asn350, Asn384, Asn498, and Asn525. The active-site Proton donor/acceptor is the Glu532. Glu547 provides a ligand contact to substrate. The helical transmembrane segment at 596–616 threads the bilayer; sequence AGQVMTGILALVISLAAGFIG. Topologically, residues 617 to 626 are cytoplasmic; the sequence is KMRCANNAAQ.

It belongs to the glycosyl hydrolase 37 family. As to quaternary structure, monomer. In terms of processing, glycosylated; contains 3.1% carbohydrates.

It is found in the membrane. The enzyme catalyses alpha,alpha-trehalose + H2O = alpha-D-glucose + beta-D-glucose. With respect to regulation, inhibited by sodium, potassium and ammonium ions, and by TEMED. The sequence is that of Trehalase from Apis mellifera (Honeybee).